Consider the following 438-residue polypeptide: MPISKIHARYVYDSRGNPTVEVDLVTETGLHRAIVPSGASTGQHEACELRDGDKSKWLGKGVLKAVENVNTVLGPELIKAGLDVKDQTAVDEFLIKLDGTANKTKLGANAILGVSLAVAKAGAAEKGVPLYAHVSDLAGTKKPYVLPVPFQNVLNGGSHAGGRLAFQEFMIVPSAAPSFSEGLRWGAETYHQLKSLAKKKYGQSAGNVGDEGGVAPDIQTAEEALELISEAIEKAGYTGKMKIAMDVASSEFYKEDVKKYDLDFKNPDSDPSNWLTYEQLAALYADLTKKYPIVSIEDPFAEDDWEAWSYFYKTQDIQLVADDLTVTNPIRIKKAIELKAANALLLKVNQIGTLTESIQAAKDSYADGWGVMVSHRSGETEDVTIADIVVGIRAGQIKTGAPARSERLAKLNQILRIEEELGSNAIYAGEDFRKSVTL.

Residues histidine 159 and glutamate 168 each coordinate substrate. Glutamate 211 acts as the Proton donor in catalysis. Mg(2+)-binding residues include aspartate 246, glutamate 297, and aspartate 322. Substrate contacts are provided by glutamate 297 and aspartate 322. Lysine 347 functions as the Proton acceptor in the catalytic mechanism. Residues 374–377 and lysine 398 contribute to the substrate site; that span reads SHRS.

It belongs to the enolase family. As to quaternary structure, homodimer. Requires Mg(2+) as cofactor.

It is found in the cytoplasm. It carries out the reaction (2R)-2-phosphoglycerate = phosphoenolpyruvate + H2O. The protein operates within carbohydrate degradation; glycolysis; pyruvate from D-glyceraldehyde 3-phosphate: step 4/5. The sequence is that of Enolase (ENO1) from Cryphonectria parasitica (Chestnut blight fungus).